A 91-amino-acid polypeptide reads, in one-letter code: Large ribosomal subunit protein bL31B (91 aa).

The protein belongs to the bacterial ribosomal protein bL31 family. Type B subfamily. In terms of assembly, part of the 50S ribosomal subunit.

The chain is Large ribosomal subunit protein bL31B from Neisseria meningitidis serogroup B (strain ATCC BAA-335 / MC58).